The primary structure comprises 601 residues: Arginine--tRNA ligase (601 aa).

Positions 133–143 (PNTNKPLHLGH) match the 'HIGH' region motif.

The protein belongs to the class-I aminoacyl-tRNA synthetase family. As to quaternary structure, monomer.

The protein localises to the cytoplasm. The catalysed reaction is tRNA(Arg) + L-arginine + ATP = L-arginyl-tRNA(Arg) + AMP + diphosphate. This is Arginine--tRNA ligase from Flavobacterium psychrophilum (strain ATCC 49511 / DSM 21280 / CIP 103535 / JIP02/86).